Consider the following 783-residue polypeptide: Zinc finger protein 107 (783 aa).

A C2H2-type 1; atypical zinc finger spans residues 76–98; sequence FQCNKYVKVFDKFSNSNRYKRRH. 3 consecutive C2H2-type zinc fingers follow at residues 104–126, 132–154, and 160–182; these read FKCK…RRIH, YKCE…KRIH, and YKCE…KIIH. Lys186 participates in a covalent cross-link: Glycyl lysine isopeptide (Lys-Gly) (interchain with G-Cter in SUMO2). The segment at 188–210 adopts a C2H2-type 5 zinc-finger fold; sequence NKCEECGKAFKQASHLTIHKIIH. Residues 216 to 238 form a C2H2-type 6; atypical zinc finger; the sequence is YKYEECGKVFSQSSHLTTQKILH. The C2H2-type 7 zinc finger occupies 244–266; the sequence is YKCKECGKAFNLFSNLTNHKRIH. Residues 272–294 form a C2H2-type 8; atypical zinc finger; it reads YKCKECGRAFNISSNLNKQEKIH. The C2H2-type 9; atypical zinc finger occupies 300 to 322; sequence NKCEECDKAFNRSLKLTAHKKIL. 2 C2H2-type zinc fingers span residues 328-350 and 356-378; these read YKCE…KIIH and YKCK…KKIH. The segment at 384 to 406 adopts a C2H2-type 12; atypical zinc-finger fold; that stretch reads YKCEECGKAFNQHSNLINHRKIY. C2H2-type zinc fingers lie at residues 412–434, 440–462, 468–490, and 496–518; these read YKCE…KKIH, YKCE…KRIH, and YKCE…KIVH. The segment at 524-546 adopts a C2H2-type 17; atypical zinc-finger fold; the sequence is NKCEEFGKAFKQSSHRTIHKIIH. A C2H2-type 18; atypical zinc finger spans residues 552–574; it reads YKCEEHGKVFNQSSNLTTQKIIH. The C2H2-type 19; atypical zinc finger occupies 580-602; that stretch reads YKFEEHGKAFNLFSNITNHKIIY. 5 C2H2-type zinc fingers span residues 608 to 630, 636 to 658, 664 to 686, 692 to 714, and 720 to 742; these read HKCE…KRIH, YQCA…KIIH, YKCK…KKIH, YKCE…KKIH, and YKCE…KIIH. The segment at 748-770 adopts a C2H2-type 25; atypical zinc-finger fold; that stretch reads YKCGDYGRAFNLSSNLTTHKKIH.

This sequence belongs to the krueppel C2H2-type zinc-finger protein family. Expressed in brain, heart, skeletal muscle, kidney and pancreas. Weakly expressed in aorta, liver and lung.

The protein localises to the nucleus. Functionally, may be involved in transcriptional regulation. The chain is Zinc finger protein 107 (ZNF107) from Homo sapiens (Human).